A 371-amino-acid chain; its full sequence is 4-hydroxyphenylpyruvate dioxygenase-like protein (371 aa).

VOC domains are found at residues 7–135 and 160–328; these read RLCH…LLQR and HVDH…VFTK. Fe cation-binding residues include His163, His258, and Glu339.

This sequence belongs to the 4HPPD family. It depends on Fe cation as a cofactor.

It is found in the mitochondrion. It carries out the reaction 3-(4-hydroxyphenyl)pyruvate + O2 = (S)-4-hydroxymandelate + CO2. Functionally, iron-dependent dioxygenase that catalyzes the conversion of 4-hydroxyphenylpyruvate (4-HPPA) to 4-hydroxymandelate (4-HMA) in the mitochondria, one of the steps in the biosynthesis of coenzyme Q10 from tyrosine. This chain is 4-hydroxyphenylpyruvate dioxygenase-like protein, found in Mus musculus (Mouse).